The sequence spans 691 residues: Lipase 2 (691 aa).

Residues 1–37 form the signal peptide; the sequence is MLRGQEERKYSIRKYSIGVVSVLAATMFVVTSHEAQA. A disordered region spans residues 34 to 267; it reads EAQASEKIPT…KPTDKNTDNK (234 aa). Residues 38–296 constitute a propeptide that is removed on maturation; that stretch reads SEKIPTTNAA…ADAKKVRPLK (259 aa). A compositionally biased stretch (polar residues) spans 41–72; that stretch reads IPTTNAAAQKETLNQPGEQGNAITSHQMQSGK. Residues 73 to 82 show a composition bias toward basic and acidic residues; the sequence is QLDDMHKENG. Polar residues-rich tracts occupy residues 94-115, 125-135, 142-172, and 186-196; these read LQSS…NDNQ, SKQSHQNNATN, DQIQ…QPSI, and PTSTTPPSNDK. Composition is skewed to basic and acidic residues over residues 197–214 and 258–267; these read TAPK…KHPN and KPTDKNTDNK. Serine 413 (nucleophile) is an active-site residue. A Ca(2+)-binding site is contributed by glycine 580. Aspartate 604 serves as the catalytic Charge relay system. Aspartate 645 lines the Ca(2+) pocket. The active-site Charge relay system is histidine 646. The Ca(2+) site is built by aspartate 648, aspartate 653, and aspartate 656.

It belongs to the AB hydrolase superfamily. Lipase family.

The protein localises to the secreted. The catalysed reaction is a triacylglycerol + H2O = a diacylglycerol + a fatty acid + H(+). The polypeptide is Lipase 2 (lip2) (Staphylococcus aureus (strain MRSA252)).